Reading from the N-terminus, the 714-residue chain is Calpain-1 catalytic subunit (714 aa).

The Calpain catalytic domain occupies 55 to 354 (LFRDEAFPPV…FTRLEICNLT (300 aa)). Positions 109 and 114 each coordinate Ca(2+). Catalysis depends on residues cysteine 115, histidine 272, and asparagine 296. Ca(2+)-binding residues include asparagine 316, aspartate 318, and aspartate 323. At threonine 354 the chain carries Phosphothreonine. Residues 355 to 526 (PDALKSRTIR…KSAGTAELDD (172 aa)) form a domain III region. Residues 527-542 (QIQANLPDEQVLSEEE) form a linker region. EF-hand domains follow at residues 541–576 (EEID…IISK), 585–618 (FSLE…NRIR), 615–650 (NRIR…AGFK), and 680–714 (VRLE…TMFA). The tract at residues 543-713 (IDENFKALFR…LFKWLQLTMF (171 aa)) is domain IV. Ca(2+) is bound by residues aspartate 598, aspartate 600, asparagine 602, lysine 604, glutamate 609, aspartate 628, aspartate 630, serine 632, serine 634, and glutamate 639.

The protein belongs to the peptidase C2 family. As to quaternary structure, forms a heterodimer with a small (regulatory) subunit CAPNS1. The cofactor is Ca(2+). Undergoes calcium-induced successive autoproteolytic cleavages that generate a membrane-bound 78 kDa active form and an intracellular 75 kDa active form. Calpastatin reduces with high efficiency the transition from 78 kDa to 75 kDa calpain forms.

It is found in the cytoplasm. The protein localises to the cell membrane. It catalyses the reaction Broad endopeptidase specificity.. Its activity is regulated as follows. Activated by micromolar concentrations of calcium and inhibited by calpastatin. Its function is as follows. Calcium-regulated non-lysosomal thiol-protease which catalyzes limited proteolysis of substrates involved in cytoskeletal remodeling and signal transduction. Proteolytically cleaves CTBP1. Cleaves and activates caspase-7 (CASP7). This is Calpain-1 catalytic subunit from Pongo abelii (Sumatran orangutan).